The primary structure comprises 317 residues: Ribosomal RNA large subunit methyltransferase F (317 aa).

This sequence belongs to the methyltransferase superfamily. METTL16/RlmF family.

It localises to the cytoplasm. The catalysed reaction is adenosine(1618) in 23S rRNA + S-adenosyl-L-methionine = N(6)-methyladenosine(1618) in 23S rRNA + S-adenosyl-L-homocysteine + H(+). Functionally, specifically methylates the adenine in position 1618 of 23S rRNA. The chain is Ribosomal RNA large subunit methyltransferase F from Pseudomonas putida (strain ATCC 47054 / DSM 6125 / CFBP 8728 / NCIMB 11950 / KT2440).